Consider the following 252-residue polypeptide: Trans-aconitate 2-methyltransferase (252 aa).

Belongs to the methyltransferase superfamily. Tam family.

Its subcellular location is the cytoplasm. It catalyses the reaction trans-aconitate + S-adenosyl-L-methionine = (E)-3-(methoxycarbonyl)pent-2-enedioate + S-adenosyl-L-homocysteine. Its function is as follows. Catalyzes the S-adenosylmethionine monomethyl esterification of trans-aconitate. In Escherichia coli (strain ATCC 8739 / DSM 1576 / NBRC 3972 / NCIMB 8545 / WDCM 00012 / Crooks), this protein is Trans-aconitate 2-methyltransferase.